The chain runs to 496 residues: Polyamine oxidase 6 (496 aa).

Positions Met1–Gly27 are cleaved as a signal peptide. Glu61 and Arg69 together coordinate FAD. N-linked (GlcNAc...) asparagine glycans are attached at residues Asn103 and Asn150. Val261 lines the FAD pocket. The N-linked (GlcNAc...) asparagine glycan is linked to Asn278. Residue Glu454 coordinates FAD.

It belongs to the flavin monoamine oxidase family. FAD is required as a cofactor.

It localises to the secreted. Its subcellular location is the extracellular space. The protein localises to the apoplast. It functions in the pathway amine and polyamine degradation; spermine degradation. Flavoenzyme involved in polyamine back-conversion. Catalyzes the oxidation of the secondary amino group of polyamines, such as spermine and spermidine. In Oryza sativa subsp. japonica (Rice), this protein is Polyamine oxidase 6.